The chain runs to 122 residues: Protein FAM223B (122 aa).

It belongs to the FAM223 family.

The polypeptide is Protein FAM223B (FAM223B) (Homo sapiens (Human)).